A 148-amino-acid chain; its full sequence is Cytochrome c-type biogenesis protein CcmE (148 aa).

Topologically, residues 1–7 are cytoplasmic; it reads MKARNKR. The helical; Signal-anchor for type II membrane protein transmembrane segment at 8–28 threads the bilayer; it reads LMLVGGGIALLVAAAALVLSA. The Periplasmic portion of the chain corresponds to 29 to 148; the sequence is FQQNLVFFHT…AHKTATTVQQ (120 aa). The heme site is built by His-123 and Tyr-127.

It belongs to the CcmE/CycJ family.

The protein resides in the cell inner membrane. Functionally, heme chaperone required for the biogenesis of c-type cytochromes. Transiently binds heme delivered by CcmC and transfers the heme to apo-cytochromes in a process facilitated by CcmF and CcmH. The protein is Cytochrome c-type biogenesis protein CcmE of Azoarcus sp. (strain BH72).